We begin with the raw amino-acid sequence, 349 residues long: Aspartate carbamoyltransferase catalytic subunit (349 aa).

Carbamoyl phosphate contacts are provided by Arg59 and Thr60. An L-aspartate-binding site is contributed by Lys87. Positions 109, 142, and 145 each coordinate carbamoyl phosphate. Residues Arg182 and Arg253 each contribute to the L-aspartate site. Gly294 and Pro295 together coordinate carbamoyl phosphate.

It belongs to the aspartate/ornithine carbamoyltransferase superfamily. ATCase family. As to quaternary structure, heterododecamer (2C3:3R2) of six catalytic PyrB chains organized as two trimers (C3), and six regulatory PyrI chains organized as three dimers (R2).

It catalyses the reaction carbamoyl phosphate + L-aspartate = N-carbamoyl-L-aspartate + phosphate + H(+). It functions in the pathway pyrimidine metabolism; UMP biosynthesis via de novo pathway; (S)-dihydroorotate from bicarbonate: step 2/3. Its function is as follows. Catalyzes the condensation of carbamoyl phosphate and aspartate to form carbamoyl aspartate and inorganic phosphate, the committed step in the de novo pyrimidine nucleotide biosynthesis pathway. This chain is Aspartate carbamoyltransferase catalytic subunit, found in Synechococcus sp. (strain CC9605).